Reading from the N-terminus, the 196-residue chain is Ribonuclease HII (196 aa).

In terms of domain architecture, RNase H type-2 spans 9-196 (RLVAGVDEVG…KPVRRALGIE (188 aa)). The a divalent metal cation site is built by D15, E16, and D107.

Belongs to the RNase HII family. The cofactor is Mn(2+). Mg(2+) is required as a cofactor.

The protein localises to the cytoplasm. It catalyses the reaction Endonucleolytic cleavage to 5'-phosphomonoester.. Endonuclease that specifically degrades the RNA of RNA-DNA hybrids. The polypeptide is Ribonuclease HII (Aeromonas hydrophila subsp. hydrophila (strain ATCC 7966 / DSM 30187 / BCRC 13018 / CCUG 14551 / JCM 1027 / KCTC 2358 / NCIMB 9240 / NCTC 8049)).